The chain runs to 369 residues: Glutamate 5-kinase (369 aa).

Lysine 9 contributes to the ATP binding site. Positions 49, 136, and 148 each coordinate substrate. ATP is bound by residues 168–169 and 210–216; these read TD and TGGMLTK. In terms of domain architecture, PUA spans 275–355; sequence RGGVYVDEGA…KGVFIHRDDW (81 aa).

It belongs to the glutamate 5-kinase family.

The protein resides in the cytoplasm. It catalyses the reaction L-glutamate + ATP = L-glutamyl 5-phosphate + ADP. It participates in amino-acid biosynthesis; L-proline biosynthesis; L-glutamate 5-semialdehyde from L-glutamate: step 1/2. In terms of biological role, catalyzes the transfer of a phosphate group to glutamate to form L-glutamate 5-phosphate. In Neisseria meningitidis serogroup A / serotype 4A (strain DSM 15465 / Z2491), this protein is Glutamate 5-kinase.